A 507-amino-acid polypeptide reads, in one-letter code: Putative F-box/LRR-repeat protein At4g00320 (507 aa).

In terms of domain architecture, F-box spans 12 to 60 (RDGISGLPDAMICHILSFLPTKVAASTTVLAKRWKPLLAFMPNLDFDES). LRR repeat units lie at residues 135-163 (RGFG…KIQF), 187-212 (YVKM…LLMN), 214-240 (IWKE…KFSR), 317-348 (ILYL…TIRT), and 349-374 (GVHI…VFEG).

In Arabidopsis thaliana (Mouse-ear cress), this protein is Putative F-box/LRR-repeat protein At4g00320.